Here is a 129-residue protein sequence, read N- to C-terminus: Small ribosomal subunit protein uS12 (129 aa).

A disordered region spans residues 110-129 (RKQGRSRYGAHRKQVAATKK).

The protein belongs to the universal ribosomal protein uS12 family. In terms of assembly, part of the 30S ribosomal subunit. Contacts proteins S8 and S17. May interact with IF1 in the 30S initiation complex.

In terms of biological role, with S4 and S5 plays an important role in translational accuracy. Interacts with and stabilizes bases of the 16S rRNA that are involved in tRNA selection in the A site and with the mRNA backbone. Located at the interface of the 30S and 50S subunits, it traverses the body of the 30S subunit contacting proteins on the other side and probably holding the rRNA structure together. The combined cluster of proteins S8, S12 and S17 appears to hold together the shoulder and platform of the 30S subunit. The protein is Small ribosomal subunit protein uS12 of Rickettsia prowazekii (strain Madrid E).